We begin with the raw amino-acid sequence, 172 residues long: Bifunctional protein PyrR (172 aa).

Residues 93–105 (VILIDDVLYTGRT) carry the PRPP-binding motif.

The protein belongs to the purine/pyrimidine phosphoribosyltransferase family. PyrR subfamily. As to quaternary structure, homodimer and homohexamer; in equilibrium.

It carries out the reaction UMP + diphosphate = 5-phospho-alpha-D-ribose 1-diphosphate + uracil. Functionally, regulates transcriptional attenuation of the pyrimidine nucleotide (pyr) operon by binding in a uridine-dependent manner to specific sites on pyr mRNA. This disrupts an antiterminator hairpin in the RNA and favors formation of a downstream transcription terminator, leading to a reduced expression of downstream genes. Also displays a weak uracil phosphoribosyltransferase activity which is not physiologically significant. This is Bifunctional protein PyrR from Streptococcus sanguinis (strain SK36).